The chain runs to 929 residues: Leucine--tRNA ligase (929 aa).

The short motif at 42–52 is the 'HIGH' region element; it reads PYPSGNLHMGH. The short motif at 614 to 618 is the 'KMSKS' region element; that stretch reads KMSKS. Residue lysine 617 participates in ATP binding.

The protein belongs to the class-I aminoacyl-tRNA synthetase family.

It is found in the cytoplasm. It catalyses the reaction tRNA(Leu) + L-leucine + ATP = L-leucyl-tRNA(Leu) + AMP + diphosphate. This is Leucine--tRNA ligase from Trichodesmium erythraeum (strain IMS101).